Consider the following 406-residue polypeptide: Inactive serine protease 35 (406 aa).

An N-terminal signal peptide occupies residues M1–G17. An N-linked (GlcNAc...) asparagine glycan is attached at N87. One can recognise a Peptidase S1 domain in the interval V121–A401. Cysteines 151 and 167 form a disulfide. Basic residues predominate over residues L186 to R204. The interval L186 to K248 is disordered.

It belongs to the peptidase S1 family.

The protein resides in the secreted. This is Inactive serine protease 35 (Prss35) from Rattus norvegicus (Rat).